Consider the following 426-residue polypeptide: Serine--tRNA ligase (426 aa).

230 to 232 (TSE) is an L-serine binding site. 261–263 (RSE) contacts ATP. E284 contributes to the L-serine binding site. Residue 348–351 (EISS) participates in ATP binding. S384 lines the L-serine pocket.

The protein belongs to the class-II aminoacyl-tRNA synthetase family. Type-1 seryl-tRNA synthetase subfamily. As to quaternary structure, homodimer. The tRNA molecule binds across the dimer.

It is found in the cytoplasm. It catalyses the reaction tRNA(Ser) + L-serine + ATP = L-seryl-tRNA(Ser) + AMP + diphosphate + H(+). The enzyme catalyses tRNA(Sec) + L-serine + ATP = L-seryl-tRNA(Sec) + AMP + diphosphate + H(+). It participates in aminoacyl-tRNA biosynthesis; selenocysteinyl-tRNA(Sec) biosynthesis; L-seryl-tRNA(Sec) from L-serine and tRNA(Sec): step 1/1. Catalyzes the attachment of serine to tRNA(Ser). Is also able to aminoacylate tRNA(Sec) with serine, to form the misacylated tRNA L-seryl-tRNA(Sec), which will be further converted into selenocysteinyl-tRNA(Sec). This Sphingopyxis alaskensis (strain DSM 13593 / LMG 18877 / RB2256) (Sphingomonas alaskensis) protein is Serine--tRNA ligase.